The primary structure comprises 702 residues: Serotransferrin-A (702 aa).

Residues 1 to 19 (MDLSLRVALCLSMLALCLA) form the signal peptide. 2 Transferrin-like domains span residues 26-340 (VRWC…ALKE) and 353-685 (VRWC…SLNK). Intrachain disulfides connect Cys-29–Cys-64 and Cys-39–Cys-55. The Fe(3+) site is built by Asp-79 and Tyr-111. 3 disulfides stabilise this stretch: Cys-134–Cys-217, Cys-179–Cys-192, and Cys-245–Cys-259. The hydrogencarbonate site is built by Thr-136, Lys-140, Ala-142, and Gly-143. Tyr-211 lines the Fe(3+) pocket. His-267 contacts Fe(3+). The connecting region stretch occupies residues 340–349 (EGVKEDDSAA). 2 disulfide bridges follow: Cys-356–Cys-388 and Cys-366–Cys-379. Fe(3+)-binding residues include Asp-403 and Tyr-442. 7 cysteine pairs are disulfide-bonded: Cys-413–Cys-697, Cys-431–Cys-658, Cys-465–Cys-544, Cys-489–Cys-686, Cys-499–Cys-513, Cys-510–Cys-527, and Cys-584–Cys-598. Hydrogencarbonate contacts are provided by Thr-467, Arg-471, Ala-473, and Gly-474. Tyr-538 provides a ligand contact to Fe(3+). Residue His-606 participates in Fe(3+) binding.

This sequence belongs to the transferrin family. As to quaternary structure, monomer. In terms of tissue distribution, plasma.

It is found in the secreted. Functionally, transferrins are iron binding transport proteins which can bind two Fe(3+) ions in association with the binding of an anion, usually bicarbonate. It is responsible for the transport of iron from sites of absorption and heme degradation to those of storage and utilization. Serum transferrin may also have a further role in stimulating cell proliferation. This Xenopus laevis (African clawed frog) protein is Serotransferrin-A (tf-a).